The primary structure comprises 134 residues: Ribosome-binding factor A (134 aa).

Residues 115–134 form a disordered region; it reads EDQRQERGEIPPGSDELQPD.

This sequence belongs to the RbfA family. As to quaternary structure, monomer. Binds 30S ribosomal subunits, but not 50S ribosomal subunits or 70S ribosomes.

Its subcellular location is the cytoplasm. In terms of biological role, one of several proteins that assist in the late maturation steps of the functional core of the 30S ribosomal subunit. Associates with free 30S ribosomal subunits (but not with 30S subunits that are part of 70S ribosomes or polysomes). Required for efficient processing of 16S rRNA. May interact with the 5'-terminal helix region of 16S rRNA. This Synechococcus sp. (strain CC9902) protein is Ribosome-binding factor A.